The sequence spans 499 residues: Sensor histidine kinase PdtaS (499 aa).

The tract at residues 4 to 149 (LGDLLAEHTM…PLEGAYLDCA (146 aa)) is GAF. The PAS-like stretch occupies residues 178-289 (DGFIRLNEGG…TEVKRRDRAL (112 aa)). The Histidine kinase domain occupies 298–493 (EIHHRVKNNL…DVVLRVPIGR (196 aa)). Residue histidine 301 is modified to Phosphohistidine; by autocatalysis.

Autophosphorylated.

Its subcellular location is the cytoplasm. It catalyses the reaction ATP + protein L-histidine = ADP + protein N-phospho-L-histidine.. Its function is as follows. Member of the two-component regulatory system PdtaR/PdtaS. This two-component system plays an essential role in mycobacterial adaptation to poor nutrient conditions. Nutrient deprivation results in increasing intracellular concentrations of cyclic diguanosine monophosphate (c-di-GMP), which binds to the PdtaS sensor and promotes its autophosphorylation, leading to the activation of the signaling cascade. The phosphate group is then transferred to PdtaR. This is Sensor histidine kinase PdtaS from Mycolicibacterium smegmatis (strain ATCC 700084 / mc(2)155) (Mycobacterium smegmatis).